The following is a 503-amino-acid chain: Endoglycoceramidase (503 aa).

An N-terminal signal peptide occupies residues 1-21 (MAETQPLVFVLMSISAILTAG). Residues Asn72, Asn108, and Asn205 are each glycosylated (N-linked (GlcNAc...) asparagine). The active-site Proton donor is the Glu239. Asn307, Asn409, and Asn485 each carry an N-linked (GlcNAc...) asparagine glycan.

It belongs to the glycosyl hydrolase 5 (cellulase A) family.

It localises to the secreted. Its subcellular location is the nematocyst. The enzyme catalyses an oligoglycosyl-(1-&gt;4)-beta-D-glucosyl-(1&lt;-&gt;1)-ceramide + H2O = an oligoglycosyl-(1-&gt;4)-D-glucose + an N-acyl-sphingoid base. Completely inhibited by Hg(2+). Cu(2+) and zinc have no effect on enzyme activity. Lithium, potassium, manganese, Ni(2+), calcium, magnesium and EDTA have no significant effect on enzyme activity. Enzyme requires presence of detergents such as Triton X-100 and Lubrol PX for the hydrolysis of glycosphingolipids. Taurodeoxycholate strongly inhibits the enzyme activity and SDS completely inhibits the enzyme activity. Hydrolysis of the glycosidic linkage between oligosaccharides and ceramides of glycosphingolipids, especially b-series polysialogangliosides. In Cyanea nozakii (Jellyfish), this protein is Endoglycoceramidase.